Reading from the N-terminus, the 245-residue chain is MGRLDGKVIVLSAAAQGIGRAAAIAFAKEGAQVIATDVNEMKLKELEAYKGIQTRVLDVTKKDQIENLCKEIDRIDVLFNVAGFVHHGTILDCTEADWDFTMNVNVRSMYFMIKTFLPKMLAQKSGNIINMSSVASSIKGVVNRCVYSTSKAAVIGLTKSVASDFIDQGIRCNCICPGTVDTPSLRERIQARPDPEQALKDFLARQRTGRMATAEEVAHLCVYLASDESAYVTGNEHIIDGGWSL.

NAD(+) contacts are provided by residues 16–18, Asp-37, and Asp-58; that span reads QGI. Residue Arg-144 coordinates substrate. Tyr-147 serves as the catalytic Proton acceptor. Residues Lys-151 and 180-184 contribute to the NAD(+) site; that span reads VDTPS. Substrate-binding residues include Arg-188 and Arg-205.

The protein belongs to the short-chain dehydrogenases/reductases (SDR) family. Homotetramer.

The protein localises to the cytoplasm. It carries out the reaction cis-4-hydroxy-L-proline + NAD(+) = 4-oxo-L-proline + NADH + H(+). The catalysed reaction is (R)-3-hydroxybutanoate + NAD(+) = acetoacetate + NADH + H(+). It participates in amino-acid metabolism. Its pathway is siderophore biosynthesis. In terms of biological role, NAD(H)-dependent dehydrogenase/reductase with a preference for cyclic substrates. Catalyzes stereoselective conversion of 4-oxo-L-proline to cis-4-hydroxy-L-proline, likely a detoxification mechanism for ketoprolines. Mediates the formation of 2,5-dihydroxybenzoate (2,5-DHBA), a siderophore that chelates free cytoplasmic iron, thereby regulating iron transport and homeostasis while protecting cells against free radical-induced oxidative stress. The iron-siderophore complex is imported into mitochondria, providing an iron source for mitochondrial metabolic processes in particular heme synthesis. May act as a 3-hydroxybutyrate dehydrogenase. This Xenopus laevis (African clawed frog) protein is Dehydrogenase/reductase SDR family member 6 (bdh2).